We begin with the raw amino-acid sequence, 21 residues long: Paulistine (21 aa).

Cysteine 7 and cysteine 14 are joined by a disulfide. Threonine 21 carries the post-translational modification Threonine amide.

This sequence belongs to the sylv/frat/paul family. In terms of processing, occurs in oxidized and reduced states which are thought to adopt a compact globular and linear structure, respectively.

Functionally, induces transient hyperalgesia and paw edema in mice. Probably exerts its effects via different pathways in an oxidation state-dependent way. The sequence is that of Paulistine from Polybia paulista (Neotropical social wasp).